The chain runs to 365 residues: uncharacterized protein (365 aa).

Disordered regions lie at residues 119–157 (ERSR…QQES), 216–298 (RPPG…DISH), and 313–365 (SHHH…LSVG). The span at 326–340 (SDPRIESRDLPERPQ) shows a compositional bias: basic and acidic residues.

This is an uncharacterized protein from Homo sapiens (Human).